Here is a 177-residue protein sequence, read N- to C-terminus: Crossover junction endodeoxyribonuclease RuvC (177 aa).

Active-site residues include Asp7, Glu68, and Asp141. Residues Asp7, Glu68, and Asp141 each contribute to the Mg(2+) site.

This sequence belongs to the RuvC family. As to quaternary structure, homodimer which binds Holliday junction (HJ) DNA. The HJ becomes 2-fold symmetrical on binding to RuvC with unstacked arms; it has a different conformation from HJ DNA in complex with RuvA. In the full resolvosome a probable DNA-RuvA(4)-RuvB(12)-RuvC(2) complex forms which resolves the HJ. Mg(2+) serves as cofactor.

The protein localises to the cytoplasm. It catalyses the reaction Endonucleolytic cleavage at a junction such as a reciprocal single-stranded crossover between two homologous DNA duplexes (Holliday junction).. In terms of biological role, the RuvA-RuvB-RuvC complex processes Holliday junction (HJ) DNA during genetic recombination and DNA repair. Endonuclease that resolves HJ intermediates. Cleaves cruciform DNA by making single-stranded nicks across the HJ at symmetrical positions within the homologous arms, yielding a 5'-phosphate and a 3'-hydroxyl group; requires a central core of homology in the junction. The consensus cleavage sequence is 5'-(A/T)TT(C/G)-3'. Cleavage occurs on the 3'-side of the TT dinucleotide at the point of strand exchange. HJ branch migration catalyzed by RuvA-RuvB allows RuvC to scan DNA until it finds its consensus sequence, where it cleaves and resolves the cruciform DNA. This Nocardioides sp. (strain ATCC BAA-499 / JS614) protein is Crossover junction endodeoxyribonuclease RuvC.